A 412-amino-acid chain; its full sequence is Inositol polyphosphate-5-phosphatase A (412 aa).

A lipid anchor (S-farnesyl cysteine) is attached at Cys-409. Residues 410-412 (VVQ) constitute a propeptide, removed in mature form.

This sequence belongs to the inositol 1,4,5-trisphosphate 5-phosphatase type I family. Interacts with TASOR. Isoprenylation at Cys-409 is required for localization at the membrane.

Its subcellular location is the cell membrane. The protein localises to the cell projection. The protein resides in the dendrite. It carries out the reaction 1D-myo-inositol 1,4,5-trisphosphate + H2O = 1D-myo-inositol 1,4-bisphosphate + phosphate. The enzyme catalyses 1D-myo-inositol 1,3,4,5-tetrakisphosphate + H2O = 1D-myo-inositol 1,3,4-trisphosphate + phosphate. Its activity is regulated as follows. Inhibited by EDTA and 2,3-bisphosphoglycerate. Functionally, phosphatase that specifically hydrolyzes the 5-phosphate of inositol 1,4,5-trisphosphate to inositol 1,4-bisphosphate, and inositol 1,3,4,5-tetrasphosphate to inositol 1,3,4-trisphosphate. Plays a crucial role in the survival of cerebellar Purkinje cells. This is Inositol polyphosphate-5-phosphatase A (INPP5A) from Canis lupus familiaris (Dog).